The sequence spans 329 residues: PDZ and LIM domain protein 1 (329 aa).

An N-acetylthreonine modification is found at T2. The region spanning 3 to 85 (TQQIDLQGPG…NLTLTVARSE (83 aa)) is the PDZ domain. Residues S90 and S130 each carry the phosphoserine modification. The residue at position 144 (Y144) is a Phosphotyrosine. The LIM zinc-binding domain maps to 258–317 (PMCDKCGTGIVGVFVKLRDRHRHPECYVCTDCGTNLKQKGHFFVEDQIYCEKHARERVTP). 8 residues coordinate Zn(2+): C260, C263, H280, C283, C286, C289, C307, and H310. Position 316 is a phosphothreonine (T316). A Phosphotyrosine modification is found at Y321.

In terms of assembly, interacts with ACTN1, ACTN2 and ACTN4. Interacts with PDLIM4. Strongly expressed in the heart and skeletal muscle, moderately expressed in the spleen, small intestine, colon, placenta, and lung. A lower level expression is seen in liver, thymus, kidney, prostate and pancreas and is not found in the brain, testis, ovary, and peripheral blood leukocytes.

It is found in the cytoplasm. It localises to the cytoskeleton. The protein localises to the myofibril. Its subcellular location is the sarcomere. The protein resides in the z line. Its function is as follows. Cytoskeletal protein that may act as an adapter that brings other proteins (like kinases) to the cytoskeleton. Involved in assembly, disassembly and directioning of stress fibers in fibroblasts. Required for the localization of ACTN1 and PALLD to stress fibers. Required for cell migration and in maintaining cell polarity of fibroblasts. The sequence is that of PDZ and LIM domain protein 1 (PDLIM1) from Homo sapiens (Human).